A 193-amino-acid chain; its full sequence is Ribonuclease HII (193 aa).

Residues 15-193 form the RNase H type-2 domain; the sequence is YIVAGIDEAG…PYHRKSFKCC (179 aa). Residues Asp21, Glu22, and Asp112 each coordinate a divalent metal cation.

The protein belongs to the RNase HII family. Mn(2+) serves as cofactor. The cofactor is Mg(2+).

It is found in the cytoplasm. It carries out the reaction Endonucleolytic cleavage to 5'-phosphomonoester.. In terms of biological role, endonuclease that specifically degrades the RNA of RNA-DNA hybrids. The polypeptide is Ribonuclease HII (Rickettsia akari (strain Hartford)).